A 288-amino-acid polypeptide reads, in one-letter code: Inositol monophosphatase 2 (288 aa).

Mg(2+)-binding residues include E81, D101, I103, and D104. E81 serves as a coordination point for substrate. Residues I103 to T106, G205 to S207, Q224, and D231 contribute to the substrate site. D231 is a Mg(2+) binding site.

The protein belongs to the inositol monophosphatase superfamily. As to quaternary structure, homodimer. Mg(2+) is required as a cofactor.

Its subcellular location is the cytoplasm. It carries out the reaction a myo-inositol phosphate + H2O = myo-inositol + phosphate. It catalyses the reaction 1D-myo-inositol 1-phosphate + H2O = myo-inositol + phosphate. The catalysed reaction is 1D-myo-inositol 2-phosphate + H2O = myo-inositol + phosphate. The enzyme catalyses 1D-myo-inositol 3-phosphate + H2O = myo-inositol + phosphate. It carries out the reaction 1D-myo-inositol 4-phosphate + H2O = myo-inositol + phosphate. It catalyses the reaction 1D-myo-inositol 5-phosphate + H2O = myo-inositol + phosphate. The catalysed reaction is 1D-myo-inositol 6-phosphate + H2O = myo-inositol + phosphate. The enzyme catalyses alpha-D-glucose 1-phosphate + H2O = D-glucose + phosphate. It carries out the reaction glycerol 2-phosphate + H2O = glycerol + phosphate. It catalyses the reaction adenosine 2'-phosphate + H2O = adenosine + phosphate. It functions in the pathway polyol metabolism; myo-inositol biosynthesis; myo-inositol from D-glucose 6-phosphate: step 2/2. Its activity is regulated as follows. Inhibited by high Li(+) and restricted Mg(2+) concentrations. Functionally, phosphatase that can use myo-inositol monophosphates, myo-inositol 1,4-diphosphate, scyllo-inositol-1,4-diphosphate, glucose-1-phosphate, beta-glycerophosphate and 2'-AMP as substrates in vitro. It is likely that IMPA2 has an as yet unidentified in vivo substrate(s). Has been implicated as the pharmacological target for lithium (Li(+)) action in brain. This Homo sapiens (Human) protein is Inositol monophosphatase 2.